The primary structure comprises 139 residues: Ribosome maturation factor RimP (139 aa).

This sequence belongs to the RimP family.

The protein localises to the cytoplasm. Functionally, required for maturation of 30S ribosomal subunits. This Syntrophomonas wolfei subsp. wolfei (strain DSM 2245B / Goettingen) protein is Ribosome maturation factor RimP.